A 326-amino-acid polypeptide reads, in one-letter code: Tryptophan--tRNA ligase (326 aa).

Residues Gln-11–Thr-13 and Gly-19–Asn-20 contribute to the ATP site. The short motif at Pro-12–Asn-20 is the 'HIGH' region element. Asp-135 contributes to the L-tryptophan binding site. Residues Gly-147–Asp-149, Val-186, and Lys-195–Ser-199 each bind ATP. Positions Lys-195–Ser-199 match the 'KMSKS' region motif.

This sequence belongs to the class-I aminoacyl-tRNA synthetase family. In terms of assembly, homodimer.

It is found in the cytoplasm. The catalysed reaction is tRNA(Trp) + L-tryptophan + ATP = L-tryptophyl-tRNA(Trp) + AMP + diphosphate + H(+). In terms of biological role, catalyzes the attachment of tryptophan to tRNA(Trp). The sequence is that of Tryptophan--tRNA ligase from Helicobacter pylori (strain ATCC 700392 / 26695) (Campylobacter pylori).